We begin with the raw amino-acid sequence, 180 residues long: Adipocyte-related X-chromosome expressed sequence 1 (180 aa).

Residues 1–11 lie on the Cytoplasmic side of the membrane; it reads MNSLLSRANSL. The chain crosses the membrane as a helical; Signal-anchor for type II membrane protein span at residues 12–32; that stretch reads FAFTLSVMAALTLGCILTTAF. Residues 33-180 lie on the Lumenal side of the membrane; that stretch reads KDRSAPVRLH…PDSYEIATTF (148 aa). Asn141 carries an N-linked (GlcNAc...) asparagine glycan.

This sequence belongs to the SPCS3 family. As to expression, strongly expressed in epididymal white and brown adipose tissue with low levels in heart.

It localises to the endoplasmic reticulum membrane. In terms of biological role, plays a role in adipogenesis. The chain is Adipocyte-related X-chromosome expressed sequence 1 from Mus musculus (Mouse).